Here is a 431-residue protein sequence, read N- to C-terminus: O-methyltransferase xanE (431 aa).

Position 283 (D283) interacts with S-adenosyl-L-methionine. H330 serves as the catalytic Proton acceptor.

The protein belongs to the class I-like SAM-binding methyltransferase superfamily. Cation-independent O-methyltransferase family.

Its pathway is secondary metabolite biosynthesis. Its function is as follows. O-methyltransferase; part of the gene cluster that mediates the biosynthesis of the isocyanide xanthocillin and its derivatives. The first step of the pathway consists in the conversion of tyrosine into a vinyl-isonitrile intermediate by the isocyanide synthase xanB. Subsequent oxidative dimerization of this intermediate to form xanthocillin may involve the cytochrome P450 monooxygenase xanG, whose expression is coregulated with that of XanB. Xanthocillin can be further modified by the isonitrile hydratase-like protein xanA which introduces N-formyl groups and the methyltransferase xanE which introduces methyl groups, leading to the production of several derivatives including fumiformamide. Finally, fumiformamide can be subject to both oxidative and reductive cyclization to yield melanocins E and F, respectively. In Aspergillus fumigatus (strain ATCC MYA-4609 / CBS 101355 / FGSC A1100 / Af293) (Neosartorya fumigata), this protein is O-methyltransferase xanE.